Here is a 120-residue protein sequence, read N- to C-terminus: MVNRNPKRSDEPVWWGLFGAGGTWFAMLTPVTILVLGILVPLGVIGPESMNYLRVAGFVTSIIGALFVIGSISMPMWHAMHRLHHGMHDLKFHTGTAGKIACYAAAALATVLSVVFIFMI.

The next 3 helical transmembrane spans lie at 25–45 (FAML…LGVI), 55–75 (VAGF…ISMP), and 100–120 (IACY…IFMI).

The protein belongs to the FrdD family. In terms of assembly, part of an enzyme complex containing four subunits: a flavoprotein (FrdA), an iron-sulfur protein (FrdB), and two hydrophobic anchor proteins (FrdC and FrdD).

The protein localises to the cell inner membrane. In terms of biological role, anchors the catalytic components of the fumarate reductase complex to the cell membrane, binds quinones. The protein is Fumarate reductase subunit D of Aliivibrio fischeri (strain MJ11) (Vibrio fischeri).